The following is a 345-amino-acid chain: NADPH dehydrogenase (345 aa).

23–26 (SPMC) contributes to the FMN binding site. Tyr28 is a substrate binding site. FMN contacts are provided by Ala60 and Gln102. 164–167 (HGAH) serves as a coordination point for substrate. FMN-binding positions include Arg215 and 307 to 308 (GR).

Belongs to the NADH:flavin oxidoreductase/NADH oxidase family. NamA subfamily. Homotetramer. FMN serves as cofactor.

The catalysed reaction is A + NADPH + H(+) = AH2 + NADP(+). In terms of biological role, catalyzes the reduction of the double bond of an array of alpha,beta-unsaturated aldehydes and ketones. It also reduces the nitro group of nitroester and nitroaromatic compounds. It could have a role in detoxification processes. In Bacillus cereus (strain ATCC 14579 / DSM 31 / CCUG 7414 / JCM 2152 / NBRC 15305 / NCIMB 9373 / NCTC 2599 / NRRL B-3711), this protein is NADPH dehydrogenase.